Here is a 234-residue protein sequence, read N- to C-terminus: Segregation and condensation protein A (234 aa).

It belongs to the ScpA family. Component of a cohesin-like complex composed of ScpA, ScpB and the Smc homodimer, in which ScpA and ScpB bind to the head domain of Smc. The presence of the three proteins is required for the association of the complex with DNA.

Its subcellular location is the cytoplasm. Functionally, participates in chromosomal partition during cell division. May act via the formation of a condensin-like complex containing Smc and ScpB that pull DNA away from mid-cell into both cell halves. This Streptococcus pyogenes serotype M5 (strain Manfredo) protein is Segregation and condensation protein A.